A 725-amino-acid polypeptide reads, in one-letter code: Catalase-peroxidase (725 aa).

The tryptophyl-tyrosyl-methioninium (Trp-Tyr) (with M-239) cross-link spans 90–213; it reads WHSAGTYRTG…LAAVQMGLIY (124 aa). Histidine 91 serves as the catalytic Proton acceptor. A cross-link (tryptophyl-tyrosyl-methioninium (Tyr-Met) (with W-90)) is located at residues 213 to 239; that stretch reads YVNPEGPNGNPDPVAAAKDIRETFARM. Position 254 (histidine 254) interacts with heme b.

The protein belongs to the peroxidase family. Peroxidase/catalase subfamily. In terms of assembly, homodimer or homotetramer. It depends on heme b as a cofactor. Formation of the three residue Trp-Tyr-Met cross-link is important for the catalase, but not the peroxidase activity of the enzyme.

It carries out the reaction H2O2 + AH2 = A + 2 H2O. The enzyme catalyses 2 H2O2 = O2 + 2 H2O. In terms of biological role, bifunctional enzyme with both catalase and broad-spectrum peroxidase activity. In Hahella chejuensis (strain KCTC 2396), this protein is Catalase-peroxidase.